The primary structure comprises 190 residues: GTP cyclohydrolase 1 (190 aa).

Zn(2+) contacts are provided by Cys-75, His-78, and Cys-146.

It belongs to the GTP cyclohydrolase I family. In terms of assembly, toroid-shaped homodecamer, composed of two pentamers of five dimers.

The enzyme catalyses GTP + H2O = 7,8-dihydroneopterin 3'-triphosphate + formate + H(+). It participates in cofactor biosynthesis; 7,8-dihydroneopterin triphosphate biosynthesis; 7,8-dihydroneopterin triphosphate from GTP: step 1/1. The sequence is that of GTP cyclohydrolase 1 from Campylobacter jejuni subsp. doylei (strain ATCC BAA-1458 / RM4099 / 269.97).